The sequence spans 267 residues: 2-keto-3-deoxy-L-rhamnonate aldolase (267 aa).

His49 functions as the Proton acceptor in the catalytic mechanism. Gln151 serves as a coordination point for substrate. Glu153 contributes to the Mg(2+) binding site. Substrate-binding residues include Ala178 and Asp179. Asp179 lines the Mg(2+) pocket.

This sequence belongs to the HpcH/HpaI aldolase family. KDR aldolase subfamily. As to quaternary structure, homohexamer. It depends on Mg(2+) as a cofactor.

It catalyses the reaction 2-dehydro-3-deoxy-L-rhamnonate = (S)-lactaldehyde + pyruvate. Catalyzes the reversible retro-aldol cleavage of 2-keto-3-deoxy-L-rhamnonate (KDR) to pyruvate and lactaldehyde. This Salmonella enteritidis PT4 (strain P125109) protein is 2-keto-3-deoxy-L-rhamnonate aldolase.